We begin with the raw amino-acid sequence, 315 residues long: MKTLWAEISCEVPVAMVDLLSDFLVELSGNGVSIENLALDTFSLETVEDSPVKTVKAYFNGDSPLGSQLDAIETFLHAHGSAFAGFVFKHPVVATIKEEDWANNWKEYFKPVRIGSRLVIKPTWEEYAAGEGDIVLKLDPGMAFGTGAHPTTKMCLEVLEMIFYGEGPYNGDGKHLDPVTVLDVGTGSGVLSIAAAKLGAERITAIDIDADAVSVAEENLALNDALPLVAVSTTALQDVPGRYDIVLANILAEELVRLAPELVDRTAPGGYLVLSGILTEKEEFVINGFGGFGLSLIERRREAEWSCLGFRLESK.

S-adenosyl-L-methionine-binding residues include threonine 152, glycine 185, aspartate 207, and asparagine 249.

It belongs to the methyltransferase superfamily. PrmA family.

The protein localises to the cytoplasm. The catalysed reaction is L-lysyl-[protein] + 3 S-adenosyl-L-methionine = N(6),N(6),N(6)-trimethyl-L-lysyl-[protein] + 3 S-adenosyl-L-homocysteine + 3 H(+). Its function is as follows. Methylates ribosomal protein L11. The sequence is that of Ribosomal protein L11 methyltransferase from Geotalea uraniireducens (strain Rf4) (Geobacter uraniireducens).